Consider the following 318-residue polypeptide: MADKVQTTLLFLAVGEFSVGILGNAFIGLVNCMDWVKKRKIASIDLILTSLAISRICLLCIILLDCFTLVLYPDVYATGKEMRIIDFFWTLTNHLSIWFATCLSIYYFFKIGNFFHPLFLWMKWRIDRVISWILLGCVVLSVFISLPATENLNADFRFCVKAKRKTNLTWSCRVNKTQHASTKLFLNLATLLPFCVCLMSFFLLILSLRRHIRRMQLSATGCRDPSTEAHVRALKAVISFLLLFIAYYLSFLIATSSYFMPETELAVIFGESIALIYPSSHSFILILGNNKLRYVSLKVIWKVMSILKGRKFQQHKQI.

The Extracellular segment spans residues 1–9 (MADKVQTTL). The chain crosses the membrane as a helical span at residues 10-30 (LFLAVGEFSVGILGNAFIGLV). Residues 31–55 (NCMDWVKKRKIASIDLILTSLAISR) lie on the Cytoplasmic side of the membrane. The chain crosses the membrane as a helical span at residues 56 to 76 (ICLLCIILLDCFTLVLYPDVY). The Extracellular segment spans residues 77 to 94 (ATGKEMRIIDFFWTLTNH). Residues 95–115 (LSIWFATCLSIYYFFKIGNFF) traverse the membrane as a helical segment. Over 116–128 (HPLFLWMKWRIDR) the chain is Cytoplasmic. The chain crosses the membrane as a helical span at residues 129 to 149 (VISWILLGCVVLSVFISLPAT). Residues 150–187 (ENLNADFRFCVKAKRKTNLTWSCRVNKTQHASTKLFLN) lie on the Extracellular side of the membrane. N-linked (GlcNAc...) asparagine glycosylation is found at asparagine 167 and asparagine 175. A helical transmembrane segment spans residues 188-208 (LATLLPFCVCLMSFFLLILSL). The Cytoplasmic portion of the chain corresponds to 209–235 (RRHIRRMQLSATGCRDPSTEAHVRALK). A helical transmembrane segment spans residues 236-256 (AVISFLLLFIAYYLSFLIATS). Topologically, residues 257 to 266 (SYFMPETELA) are extracellular. The helical transmembrane segment at 267–287 (VIFGESIALIYPSSHSFILIL) threads the bilayer. The Cytoplasmic segment spans residues 288-318 (GNNKLRYVSLKVIWKVMSILKGRKFQQHKQI).

It belongs to the G-protein coupled receptor T2R family.

It localises to the membrane. Gustducin-coupled receptor implicated in the perception of bitter compounds in the oral cavity and the gastrointestinal tract. Signals through PLCB2 and the calcium-regulated cation channel TRPM5. This is Taste receptor type 2 member 7 (TAS2R7) from Gorilla gorilla gorilla (Western lowland gorilla).